The sequence spans 79 residues: D-alanyl carrier protein (79 aa).

The Carrier domain occupies methionine 1 to glutamine 77. Serine 35 carries the post-translational modification O-(pantetheine 4'-phosphoryl)serine.

The protein belongs to the DltC family. 4'-phosphopantetheine is transferred from CoA to a specific serine of apo-DCP.

The protein resides in the cytoplasm. The protein operates within cell wall biogenesis; lipoteichoic acid biosynthesis. Carrier protein involved in the D-alanylation of lipoteichoic acid (LTA). The loading of thioester-linked D-alanine onto DltC is catalyzed by D-alanine--D-alanyl carrier protein ligase DltA. The DltC-carried D-alanyl group is further transferred to cell membrane phosphatidylglycerol (PG) by forming an ester bond, probably catalyzed by DltD. D-alanylation of LTA plays an important role in modulating the properties of the cell wall in Gram-positive bacteria, influencing the net charge of the cell wall. The polypeptide is D-alanyl carrier protein (Streptococcus pneumoniae serotype 2 (strain D39 / NCTC 7466)).